A 677-amino-acid polypeptide reads, in one-letter code: Methionine--tRNA ligase (677 aa).

Residues 15-25 (PYANGSIHLGH) carry the 'HIGH' region motif. Zn(2+) contacts are provided by cysteine 146, cysteine 149, cysteine 159, and cysteine 162. Residues 333–337 (KMSKS) carry the 'KMSKS' region motif. Lysine 336 contacts ATP. The 103-residue stretch at 575-677 (DFAKIDLRVA…DGAKPGQQVK (103 aa)) folds into the tRNA-binding domain.

It belongs to the class-I aminoacyl-tRNA synthetase family. MetG type 1 subfamily. As to quaternary structure, homodimer. Requires Zn(2+) as cofactor.

It localises to the cytoplasm. The catalysed reaction is tRNA(Met) + L-methionine + ATP = L-methionyl-tRNA(Met) + AMP + diphosphate. Its function is as follows. Is required not only for elongation of protein synthesis but also for the initiation of all mRNA translation through initiator tRNA(fMet) aminoacylation. The sequence is that of Methionine--tRNA ligase from Salmonella choleraesuis (strain SC-B67).